Here is a 471-residue protein sequence, read N- to C-terminus: Alpha-galactosidase 5 (471 aa).

An N-terminal signal peptide occupies residues 1-18 (MFAFYFLTACTTLKGVFG). Cys42 and Cys74 form a disulfide bridge. Residues Asp72 and Asp73 each coordinate substrate. N-linked (GlcNAc...) asparagine glycosylation is present at Asn105. Cys121 and Cys151 form a disulfide bridge. A substrate-binding site is contributed by Lys147. The active-site Nucleophile is Asp149. Asn175 carries an N-linked (GlcNAc...) asparagine glycan. Arg205 is a substrate binding site. Asp209 functions as the Proton donor in the catalytic mechanism. 2 disulfides stabilise this stretch: Cys221-Cys237 and Cys223-Cys230. Gln251 is a binding site for substrate. Asn270, Asn370, Asn403, Asn422, Asn435, and Asn454 each carry an N-linked (GlcNAc...) asparagine glycan.

Belongs to the glycosyl hydrolase 27 family. In terms of assembly, homotetramer.

Its subcellular location is the secreted. The catalysed reaction is Hydrolysis of terminal, non-reducing alpha-D-galactose residues in alpha-D-galactosides, including galactose oligosaccharides, galactomannans and galactolipids.. The chain is Alpha-galactosidase 5 (MEL5) from Saccharomyces cerevisiae (Baker's yeast).